The sequence spans 518 residues: U-box domain-containing protein 57 (518 aa).

Residues 86 to 142 (EEVRKVHILEEEIVTLKHQADTYLVQKEKAVTAYDQLKHERDNAVQQVNELRDQSTH) are a coiled coil. A Protein kinase domain is found at 159-409 (FKNAREVGDT…RPDLLNEVWI (251 aa)). Residues 434 to 508 (SVPAAFICPI…HGYLQQQQPN (75 aa)) enclose the U-box domain.

The catalysed reaction is S-ubiquitinyl-[E2 ubiquitin-conjugating enzyme]-L-cysteine + [acceptor protein]-L-lysine = [E2 ubiquitin-conjugating enzyme]-L-cysteine + N(6)-ubiquitinyl-[acceptor protein]-L-lysine.. It participates in protein modification; protein ubiquitination. Its function is as follows. Possesses E3 ubiquitin-protein ligase in vitro. May be involved in cell death signaling. The polypeptide is U-box domain-containing protein 57 (PUB57) (Oryza sativa subsp. japonica (Rice)).